The chain runs to 211 residues: Cyclin-dependent kinase inhibitor 3 (211 aa).

Positions 1–20 (MKPPISIQASEFDSSDEEPV) are disordered. The interaction with CDK2 stretch occupies residues 1-34 (MKPPISIQASEFDSSDEEPVDEEQTPIQISWLPL). In terms of domain architecture, Tyrosine-protein phosphatase spans 32 to 200 (LPLSRVNCSQ…FRDKLAAYLS (169 aa)). Cys-140 functions as the Phosphocysteine intermediate in the catalytic mechanism.

Belongs to the protein-tyrosine phosphatase family. Interacts with cyclin-dependent kinases such as CDK1, CDK2 and CDK3. Does not interact with CDK4. Interacts (via C-terminus) with phosphorylated CDK2 (via C-terminal helix). Interacts with MS4A3 (via C-terminus); the interaction enhances CDKN3 enzymatic activity.

The protein localises to the cytoplasm. The protein resides in the perinuclear region. It catalyses the reaction O-phospho-L-tyrosyl-[protein] + H2O = L-tyrosyl-[protein] + phosphate. The catalysed reaction is O-phospho-L-seryl-[protein] + H2O = L-seryl-[protein] + phosphate. The enzyme catalyses O-phospho-L-threonyl-[protein] + H2O = L-threonyl-[protein] + phosphate. Its function is as follows. May play a role in cell cycle regulation. Dual specificity phosphatase active toward substrates containing either phosphotyrosine or phosphoserine residues. Dephosphorylates CDK2 at 'Thr-160' in a cyclin-dependent manner. The polypeptide is Cyclin-dependent kinase inhibitor 3 (Mus musculus (Mouse)).